The following is a 153-amino-acid chain: Hydrogenase expression/formation protein HoxT (153 aa).

The protein belongs to the HupJ family.

This chain is Hydrogenase expression/formation protein HoxT (hoxT), found in Azotobacter vinelandii.